Consider the following 342-residue polypeptide: Phospho-N-acetylmuramoyl-pentapeptide-transferase (342 aa).

10 helical membrane passes run 8–28 (VAQPYFCSFLLSTILGFVIAP), 58–78 (GIPSMGGVIILLPCILSTAIF), 86–106 (IWVILTTMVAFAILGGVDDYL), 116–136 (ISLEAKLFAQLLIASAALIFL), 152–172 (GLIDLGWAYMPFAYIVVVGSS), 184–204 (LATLPIITSTAILGIIGHLSL), 213–233 (VVGANIPIFCSALVGSALSFL), 242–262 (VFMGDLGSLSLGASLGLMSVM), 267–287 (FIYAISGCIFVAEAISSMAQV), and 318–338 (IVTRAWVIAMVSFVVSLAAII).

The protein belongs to the glycosyltransferase 4 family. MraY subfamily. Mg(2+) serves as cofactor.

It localises to the cell inner membrane. The catalysed reaction is UDP-N-acetyl-alpha-D-muramoyl-L-alanyl-gamma-D-glutamyl-meso-2,6-diaminopimeloyl-D-alanyl-D-alanine + di-trans,octa-cis-undecaprenyl phosphate = di-trans,octa-cis-undecaprenyl diphospho-N-acetyl-alpha-D-muramoyl-L-alanyl-D-glutamyl-meso-2,6-diaminopimeloyl-D-alanyl-D-alanine + UMP. Its pathway is cell wall biogenesis; peptidoglycan biosynthesis. In terms of biological role, catalyzes the initial step of the lipid cycle reactions in the biosynthesis of the cell wall peptidoglycan: transfers peptidoglycan precursor phospho-MurNAc-pentapeptide from UDP-MurNAc-pentapeptide onto the lipid carrier undecaprenyl phosphate, yielding undecaprenyl-pyrophosphoryl-MurNAc-pentapeptide, known as lipid I. The chain is Phospho-N-acetylmuramoyl-pentapeptide-transferase from Anaplasma marginale (strain Florida).